Reading from the N-terminus, the 192-residue chain is Chromophore lyase CpcS/CpeS 2 (192 aa).

Belongs to the CpcS/CpeS biliprotein lyase family.

In terms of biological role, covalently attaches a chromophore to Cys residue(s) of phycobiliproteins. The sequence is that of Chromophore lyase CpcS/CpeS 2 from Synechocystis sp. (strain ATCC 27184 / PCC 6803 / Kazusa).